Consider the following 232-residue polypeptide: Succinyl-CoA:3-ketoacid coenzyme A transferase subunit A (232 aa).

24–30 contributes to the CoA binding site; sequence GGFGLCG.

The protein belongs to the 3-oxoacid CoA-transferase subunit A family. In terms of assembly, heterodimer of a subunit A and a subunit B.

The catalysed reaction is a 3-oxo acid + succinyl-CoA = a 3-oxoacyl-CoA + succinate. The protein is Succinyl-CoA:3-ketoacid coenzyme A transferase subunit A (scoA) of Helicobacter pylori (strain J99 / ATCC 700824) (Campylobacter pylori J99).